The primary structure comprises 280 residues: Protein MGF 505-3R (280 aa).

It belongs to the asfivirus MGF 505 family.

In terms of biological role, plays a role in virus cell tropism, and may be required for efficient virus replication in macrophages. The protein is Protein MGF 505-3R of African swine fever virus (isolate Warthog/Namibia/Wart80/1980) (ASFV).